A 118-amino-acid chain; its full sequence is Cell division protein FtsB (118 aa).

Residues 1-3 lie on the Cytoplasmic side of the membrane; that stretch reads MRL. The helical transmembrane segment at 4–21 threads the bilayer; sequence LFLVLLVLLGLIQYPLWL. Over 22–118 the chain is Periplasmic; the sequence is GKGGWFKVWD…PRPPATPPRR (97 aa). Residues 28-62 are a coiled coil; it reads KVWDLQRQVAEQRETNDGLRARNTALEAEVRDLAT. A disordered region spans residues 88–118; sequence LPPGTPLPSGNSTPQASALSKPRPPATPPRR. Polar residues predominate over residues 95 to 105; that stretch reads PSGNSTPQASA. The segment covering 109-118 has biased composition (pro residues); sequence PRPPATPPRR.

The protein belongs to the FtsB family. In terms of assembly, part of a complex composed of FtsB, FtsL and FtsQ.

Its subcellular location is the cell inner membrane. Functionally, essential cell division protein. May link together the upstream cell division proteins, which are predominantly cytoplasmic, with the downstream cell division proteins, which are predominantly periplasmic. The chain is Cell division protein FtsB from Bordetella parapertussis (strain 12822 / ATCC BAA-587 / NCTC 13253).